The sequence spans 150 residues: Large ribosomal subunit protein uL13 (150 aa).

The protein belongs to the universal ribosomal protein uL13 family. In terms of assembly, part of the 50S ribosomal subunit.

This protein is one of the early assembly proteins of the 50S ribosomal subunit, although it is not seen to bind rRNA by itself. It is important during the early stages of 50S assembly. This is Large ribosomal subunit protein uL13 from Chlamydia caviae (strain ATCC VR-813 / DSM 19441 / 03DC25 / GPIC) (Chlamydophila caviae).